A 499-amino-acid polypeptide reads, in one-letter code: Probable cytosol aminopeptidase (499 aa).

Residues lysine 263 and aspartate 268 each contribute to the Mn(2+) site. Lysine 275 is an active-site residue. Aspartate 286, aspartate 345, and glutamate 347 together coordinate Mn(2+). Residue arginine 349 is part of the active site.

It belongs to the peptidase M17 family. It depends on Mn(2+) as a cofactor.

It localises to the cytoplasm. It carries out the reaction Release of an N-terminal amino acid, Xaa-|-Yaa-, in which Xaa is preferably Leu, but may be other amino acids including Pro although not Arg or Lys, and Yaa may be Pro. Amino acid amides and methyl esters are also readily hydrolyzed, but rates on arylamides are exceedingly low.. The enzyme catalyses Release of an N-terminal amino acid, preferentially leucine, but not glutamic or aspartic acids.. Presumably involved in the processing and regular turnover of intracellular proteins. Catalyzes the removal of unsubstituted N-terminal amino acids from various peptides. The protein is Probable cytosol aminopeptidase of Chlamydia trachomatis serovar A (strain ATCC VR-571B / DSM 19440 / HAR-13).